Reading from the N-terminus, the 251-residue chain is BRI3-binding protein (251 aa).

A run of 4 helical transmembrane segments spans residues 13–33, 125–145, 146–166, and 185–205; these read AGLL…PGAQ, ALLL…TLGF, TFSV…VVLF, and VLPL…GFYW. A coiled-coil region spans residues 217-247; it reads NPSVEEKLEHLEKQVRLLNIRLNRVLESLDR. Lys-229 carries the post-translational modification N6-acetyllysine. Ser-248 bears the Phosphoserine mark.

Interacts with LETMD1. Interacts with BRI3 (isoforms 1 and 2); the interaction with isoform 2 is weaker than with isoform 1. Interacts with BRI3; the interaction is weak. Interacts with TMEM238L. As to expression, most abundantly expressed in brain, liver and kidney. Overexpressed in leukemia and lymphoma cell lines, as well as in various carcinomas.

Its subcellular location is the mitochondrion outer membrane. In terms of biological role, involved in tumorigenesis and may function by stabilizing p53/TP53. In Homo sapiens (Human), this protein is BRI3-binding protein.